The following is a 621-amino-acid chain: Endoglucanase 25 (621 aa).

Residues 1–26 (MYGRDPWGGPLEINTADSATDDDRSR) are disordered. The Cytoplasmic segment spans residues 1 to 70 (MYGRDPWGGP…DLGCIIVSRK (70 aa)). The segment at 48 to 49 (LL) is polarized targeting signal 1 (PTS1). The segment at 59-62 (YVDL) is polarized targeting signal 2 (PTS2). A helical; Signal-anchor for type II membrane protein transmembrane segment spans residues 71 to 91 (IFVWTVGTLVAAALLAGFITL). Topologically, residues 92–621 (IVKTVPRHHP…PPPPPAPWKP (530 aa)) are extracellular. N-linked (GlcNAc...) asparagine glycosylation is found at Asn-108 and Asn-133. Asp-165 functions as the Nucleophile in the catalytic mechanism. N-linked (GlcNAc...) asparagine glycosylation is found at Asn-216, Asn-324, Asn-345, Asn-408, and Asn-425. Residues His-513 and Asp-561 contribute to the active site. Asn-567 carries an N-linked (GlcNAc...) asparagine glycan. The active site involves Glu-570.

Belongs to the glycosyl hydrolase 9 (cellulase E) family. In terms of processing, glycosylated. N-glycosylation of KOR in the endoplasmic reticulum followed by N-glycan modifications in the Golgi are essential for catalytic activity. In terms of tissue distribution, highly expressed in roots and stems, at intermediate levels in leaves and flowers, and at lower levels in siliques. Expressed in xylem (at protein level).

The protein localises to the cell membrane. It catalyses the reaction Endohydrolysis of (1-&gt;4)-beta-D-glucosidic linkages in cellulose, lichenin and cereal beta-D-glucans.. Its function is as follows. Required for cellulose microfibril formation. Involved in cell wall assembly during cell elongation and cell plate maturation in cytokinesis. Required for secondary cell wall formation in the developing xylem. May cycle through different intracellular compartments, including plasma membrane. The sequence is that of Endoglucanase 25 (KOR) from Arabidopsis thaliana (Mouse-ear cress).